The following is a 245-amino-acid chain: tRNA1(Val) (adenine(37)-N6)-methyltransferase (245 aa).

It belongs to the methyltransferase superfamily. tRNA (adenine-N(6)-)-methyltransferase family.

The protein resides in the cytoplasm. The catalysed reaction is adenosine(37) in tRNA1(Val) + S-adenosyl-L-methionine = N(6)-methyladenosine(37) in tRNA1(Val) + S-adenosyl-L-homocysteine + H(+). Its function is as follows. Specifically methylates the adenine in position 37 of tRNA(1)(Val) (anticodon cmo5UAC). The chain is tRNA1(Val) (adenine(37)-N6)-methyltransferase from Citrobacter koseri (strain ATCC BAA-895 / CDC 4225-83 / SGSC4696).